We begin with the raw amino-acid sequence, 683 residues long: Phenoloxidase 3 (683 aa).

Residues 1-48 (MADKKNLLLLFDHPTEPVFMDKGGNGTVFDVPDSYVTDRYNQMCKKVQ) constitute a propeptide that is removed on maturation. Residues His209, His213, and His239 each contribute to the Cu cation site. Residue Glu351 is the Proton acceptor of the active site. An N-linked (GlcNAc...) asparagine glycan is attached at Asn358. Residues His366, His370, and His406 each contribute to the Cu cation site. N-linked (GlcNAc...) asparagine glycans are attached at residues Asn492 and Asn546. Cystine bridges form between Cys574–Cys617 and Cys576–Cys624.

The protein belongs to the tyrosinase family. It depends on Cu(2+) as a cofactor. In terms of processing, upon activation, a trypsin type protease cleaves prophenol oxidase to yield the active enzyme.

It localises to the secreted. The catalysed reaction is 2 L-dopa + O2 = 2 L-dopaquinone + 2 H2O. It catalyses the reaction L-tyrosine + O2 = L-dopaquinone + H2O. Functionally, this is a copper-containing oxidase that functions in the formation of pigments such as melanins and other polyphenolic compounds. Catalyzes the rate-limiting conversions of tyrosine to DOPA, DOPA to DOPA-quinone and possibly 5,6 dihydroxyindole to indole-5'6 quinone. In Drosophila melanogaster (Fruit fly), this protein is Phenoloxidase 3 (PPO3).